Consider the following 404-residue polypeptide: Probable eukaryotic initiation factor 4A (404 aa).

Residues 1-28 (MAQQGKVEPQDQDSFLDDQPGIRPIPSF) are disordered. The Q motif motif lies at 26-54 (PSFDDMPLHQNLLRGIYSHGFEKPSSIQQ). Residues 57–231 (IVPFTRGGDI…KKFMRDPTRI (175 aa)) form the Helicase ATP-binding domain. Residue 70–77 (AQSGTGKT) participates in ATP binding. The short motif at 179-182 (DEAD) is the DEAD box element. The Helicase C-terminal domain occupies 242–402 (GIKQFFIAVE…ELPVDFAAYL (161 aa)).

This sequence belongs to the DEAD box helicase family. eIF4A subfamily. In terms of assembly, eIF4F is a multi-subunit complex, the composition of which varies with external and internal environmental conditions. It is composed of at least EIF4A, EIF4E and EIF4G.

The enzyme catalyses ATP + H2O = ADP + phosphate + H(+). Its function is as follows. ATP-dependent RNA helicase which is a subunit of the eIF4F complex involved in cap recognition and is required for mRNA binding to ribosome. In the current model of translation initiation, eIF4A unwinds RNA secondary structures in the 5'-UTR of mRNAs which is necessary to allow efficient binding of the small ribosomal subunit, and subsequent scanning for the initiator codon. The chain is Probable eukaryotic initiation factor 4A from Trypanosoma brucei brucei (strain 927/4 GUTat10.1).